Reading from the N-terminus, the 519-residue chain is Protein BANP (519 aa).

Residues Ser19, Ser90, and Ser100 each carry the phosphoserine modification. Residues 53–90 (IKTICLRLDSIEAKLQALEATCKSLEEKLDLVTNKQHS) adopt a coiled-coil conformation. Lys133 is covalently cross-linked (Glycyl lysine isopeptide (Lys-Gly) (interchain with G-Cter in SUMO2)). The interval 152-342 (NAVPGRRQNT…FSRRTPNSSS (191 aa)) is interaction with CUX1 and HDAC1. Residues 168 to 177 (GQEDSHHEDG) show a composition bias toward basic and acidic residues. The tract at residues 168–196 (GQEDSHHEDGESGSEASDSVSSCGQAGSQ) is disordered. Over residues 180–189 (GSEASDSVSS) the composition is skewed to low complexity. The region spanning 226–322 (EMRVRCAIIP…SKCRTAWRRK (97 aa)) is the BEN domain. Lys275 carries the post-translational modification N6-acetyllysine. The segment at 327-364 (SLAVKSFSRRTPNSSSYCPSEPMMSTPPPASELPQPQP) is disordered. The segment covering 335 to 344 (RRTPNSSSYC) has biased composition (polar residues). Phosphothreonine occurs at positions 337 and 352. The interval 342-393 (SYCPSEPMMSTPPPASELPQPQPQPQALHYALANAQQVQIHQIGEDGQVQVG) is DNA-binding. Positions 351–364 (STPPPASELPQPQP) are enriched in pro residues.

This sequence belongs to the BANP/SMAR1 family. As to quaternary structure, part of a corepressor complex containing BANP, HDAC1, SIN3A, SIN3B, RBL1 and RBL2. Forms a trimeric complex in the nucleus consisting of BANP, HDAC6 and KHDRBS1/SAM68; HDAC6 keeps KHDRBS1 in a deacetylated state which inhibits the inclusion of CD44 alternate exons. The complex is disrupted by MAPK1/MAPK3-mediated phosphorylation of BANP which results in BANP export to the cytoplasm. This facilitates acetylation of KHDRBS1 and CD44 variant exon inclusion. Interacts with TP53. Interacts with CUX1/CDP. Interacts with HDAC1. MAPK1/MAPK3-mediated phosphorylation at Thr-337 and Thr-352 results in export to the cytoplasm. In terms of tissue distribution, down-regulated in breast cancer cell lines.

Its subcellular location is the nucleus. The protein resides in the nucleus speckle. It localises to the cytoplasm. In terms of biological role, controls V(D)J recombination during T-cell development by repressing T-cell receptor (TCR) beta enhancer function. Binds to scaffold/matrix attachment region beta (S/MARbeta), an ATC-rich DNA sequence located upstream of the TCR beta enhancer. Represses cyclin D1 transcription by recruiting HDAC1 to its promoter, thereby diminishing H3K9ac, H3S10ph and H4K8ac levels. Promotes TP53 activation, which causes cell cycle arrest. Plays a role in the regulation of alternative splicing. Binds to CD44 pre-mRNA and negatively regulates the inclusion of CD44 proximal variable exons v2-v6 but has no effect on distal variable exons v7-v10. The polypeptide is Protein BANP (BANP) (Homo sapiens (Human)).